A 438-amino-acid chain; its full sequence is Aspartate--tRNA(Asp/Asn) ligase (438 aa).

Position 176 (Glu-176) interacts with L-aspartate. The aspartate stretch occupies residues 198 to 201 (QLYK). Arg-220 is an L-aspartate binding site. Residues 220 to 222 (RAE), 228 to 230 (RHL), and Glu-361 contribute to the ATP site. Mg(2+) contacts are provided by Glu-361 and Ser-364. Residues Ser-364 and Arg-368 each coordinate L-aspartate. Residue 409–412 (GADR) coordinates ATP.

It belongs to the class-II aminoacyl-tRNA synthetase family. Type 2 subfamily. Homodimer. Mg(2+) serves as cofactor.

The protein localises to the cytoplasm. It carries out the reaction tRNA(Asx) + L-aspartate + ATP = L-aspartyl-tRNA(Asx) + AMP + diphosphate. In terms of biological role, aspartyl-tRNA synthetase with relaxed tRNA specificity since it is able to aspartylate not only its cognate tRNA(Asp) but also tRNA(Asn). Reaction proceeds in two steps: L-aspartate is first activated by ATP to form Asp-AMP and then transferred to the acceptor end of tRNA(Asp/Asn). This chain is Aspartate--tRNA(Asp/Asn) ligase, found in Methanococcus maripaludis (strain C6 / ATCC BAA-1332).